Here is a 216-residue protein sequence, read N- to C-terminus: uncharacterized protein (216 aa).

Over residues 182–193 (STSNASVNSDDA) the composition is skewed to polar residues. The tract at residues 182–204 (STSNASVNSDDASTAELGPTSEE) is disordered.

This is an uncharacterized protein from Caenorhabditis elegans.